Here is a 249-residue protein sequence, read N- to C-terminus: UDP-N-acetyl-D-mannosaminuronic acid transferase (249 aa).

The protein belongs to the glycosyltransferase 26 family.

It carries out the reaction UDP-N-acetyl-alpha-D-mannosaminouronate + N-acetyl-alpha-D-glucosaminyl-di-trans,octa-cis-undecaprenyl diphosphate = beta-D-ManNAcA-(1-&gt;4)-alpha-D-GlcNAc-di-trans,octa-cis-undecaprenyl diphosphate + UDP + H(+). The protein operates within bacterial outer membrane biogenesis; enterobacterial common antigen biosynthesis. In terms of biological role, catalyzes the synthesis of Und-PP-GlcNAc-ManNAcA (Lipid II), the second lipid-linked intermediate involved in enterobacterial common antigen (ECA) synthesis. In Pectobacterium carotovorum subsp. carotovorum (strain PC1), this protein is UDP-N-acetyl-D-mannosaminuronic acid transferase.